The primary structure comprises 475 residues: Adenosylhomocysteinase (475 aa).

Threonine 63, aspartate 138, and glutamate 199 together coordinate substrate. 200-202 is an NAD(+) binding site; it reads TTT. 2 residues coordinate substrate: lysine 229 and aspartate 233. NAD(+)-binding positions include asparagine 234, 263–268, glutamate 286, asparagine 321, 342–344, and asparagine 389; these read GYGDVG and IGH.

The protein belongs to the adenosylhomocysteinase family. The cofactor is NAD(+).

It is found in the cytoplasm. The catalysed reaction is S-adenosyl-L-homocysteine + H2O = L-homocysteine + adenosine. It functions in the pathway amino-acid biosynthesis; L-homocysteine biosynthesis; L-homocysteine from S-adenosyl-L-homocysteine: step 1/1. Functionally, may play a key role in the regulation of the intracellular concentration of adenosylhomocysteine. The protein is Adenosylhomocysteinase of Solibacter usitatus (strain Ellin6076).